A 235-amino-acid polypeptide reads, in one-letter code: Sperm annulus positionning complex subunit Chibby3 (235 aa).

Residues M1–T41 form a disordered region. Low complexity predominate over residues S14–P32. Positions L167–L181 are leucine-zipper; mediates homodimerization.

This sequence belongs to the chibby family. Homodimer. Interacts with CIBAR1 (via BAR-like domain); both proteins form a ninefold symmetric structure at the flagellar base; are recruited to the annulus in a mutually dependent manner and regulate annulus positionning. Testis-specific.

The protein localises to the cell projection. The protein resides in the cilium. It localises to the flagellum. Plays a key role in the correct positioning of the annulus, a septin-based ring strucure in the sperm flagellum, serving both as a physical barrier and a membrane diffusion barrier that separates the midpiece (MP) from the principal piece (PP). This positioning is essential for proper sperm motility and function. Interacts with CIBAR1 to form a complex which localizes to the curved membrane region of the flagellar pocket. By doing so, may provide stability and rigidity to the periannular membrane to prevent membrane deformation. This function is crucial for halting annulus migration at the proximal end of the fibrous sheath-containing PP. The polypeptide is Sperm annulus positionning complex subunit Chibby3 (Cby3) (Mus musculus (Mouse)).